Reading from the N-terminus, the 379-residue chain is Heterogeneous nuclear ribonucleoprotein A3 (379 aa).

N-acetylmethionine is present on methionine 1. Over residues 1–10 (MEVKPPPGRP) the composition is skewed to pro residues. Residues 1 to 34 (MEVKPPPGRPQPDSGRRRRRRGEEGHDPKEPEQL) are disordered. A Glycyl lysine isopeptide (Lys-Gly) (interchain with G-Cter in SUMO2) cross-link involves residue lysine 4. Serine 14 carries the phosphoserine modification. Basic and acidic residues predominate over residues 21 to 34 (RGEEGHDPKEPEQL). The RRM 1 domain maps to 35-118 (RKLFIGGLSF…RAVSREDSVK (84 aa)). A Glycyl lysine isopeptide (Lys-Gly) (interchain with G-Cter in SUMO2) cross-link involves residue lysine 36. Serine 43 is modified (phosphoserine). The residue at position 52 (arginine 52) is a Dimethylated arginine; alternate. At arginine 52 the chain carries Omega-N-methylarginine; alternate. Position 76 is an omega-N-methylarginine (arginine 76). Residues serine 112 and serine 116 each carry the phosphoserine modification. Lysine 118 participates in a covalent cross-link: Glycyl lysine isopeptide (Lys-Gly) (interchain with G-Cter in SUMO2). Threonine 124 carries the post-translational modification Phosphothreonine. The 80-residue stretch at 126 to 205 (KKIFVGGIKE…CEVKKALSKQ (80 aa)) folds into the RRM 2 domain. Lysine 134 bears the N6-acetyllysine; alternate mark. A Glycyl lysine isopeptide (Lys-Gly) (interchain with G-Cter in SUMO2); alternate cross-link involves residue lysine 134. Residues lysine 151 and lysine 182 each participate in a glycyl lysine isopeptide (Lys-Gly) (interchain with G-Cter in SUMO2) cross-link. Positions 204–225 (KQEMQSAGSQRGRGGGSGNFMG) are disordered. Arginine 214, arginine 216, arginine 226, arginine 239, and arginine 246 each carry omega-N-methylarginine; alternate. 5 positions are modified to asymmetric dimethylarginine; alternate: arginine 214, arginine 216, arginine 226, arginine 239, and arginine 246. Over residues 214–225 (RGRGGGSGNFMG) the composition is skewed to gly residues. Residue arginine 257 is modified to Omega-N-methylarginine. Arginine 286 is modified (asymmetric dimethylarginine). A disordered region spans residues 335–379 (NYSGQQQSNYGPMKGGSFGGRSSGSPYGGGYGSGGGSGGYGSRRF). Residues 347 to 379 (MKGGSFGGRSSGSPYGGGYGSGGGSGGYGSRRF) show a composition bias toward gly residues. The residue at position 351 (serine 351) is a Phosphoserine. Position 355 is an omega-N-methylarginine (arginine 355). Serine 359 carries the post-translational modification Phosphoserine. Phosphotyrosine occurs at positions 361 and 365. Phosphoserine is present on residues serine 367 and serine 371. Tyrosine 374 bears the Phosphotyrosine mark. Serine 376 carries the post-translational modification Phosphoserine.

As to quaternary structure, identified in the spliceosome C complex.

It localises to the nucleus. Its function is as follows. Plays a role in cytoplasmic trafficking of RNA. Binds to the cis-acting response element, A2RE. May be involved in pre-mRNA splicing. This Mus musculus (Mouse) protein is Heterogeneous nuclear ribonucleoprotein A3 (Hnrnpa3).